Here is a 153-residue protein sequence, read N- to C-terminus: D-aminoacyl-tRNA deacylase (153 aa).

A Gly-cisPro motif, important for rejection of L-amino acids motif is present at residues 137–138 (GP).

This sequence belongs to the DTD family. Homodimer.

Its subcellular location is the cytoplasm. It carries out the reaction glycyl-tRNA(Ala) + H2O = tRNA(Ala) + glycine + H(+). The enzyme catalyses a D-aminoacyl-tRNA + H2O = a tRNA + a D-alpha-amino acid + H(+). Functionally, an aminoacyl-tRNA editing enzyme that deacylates mischarged D-aminoacyl-tRNAs. Also deacylates mischarged glycyl-tRNA(Ala), protecting cells against glycine mischarging by AlaRS. Acts via tRNA-based rather than protein-based catalysis; rejects L-amino acids rather than detecting D-amino acids in the active site. By recycling D-aminoacyl-tRNA to D-amino acids and free tRNA molecules, this enzyme counteracts the toxicity associated with the formation of D-aminoacyl-tRNA entities in vivo and helps enforce protein L-homochirality. This is D-aminoacyl-tRNA deacylase from Dehalococcoides mccartyi (strain ATCC BAA-2266 / KCTC 15142 / 195) (Dehalococcoides ethenogenes (strain 195)).